The sequence spans 510 residues: 2,3-bisphosphoglycerate-independent phosphoglycerate mutase (510 aa).

Mn(2+) contacts are provided by Asp-13 and Ser-63. Ser-63 acts as the Phosphoserine intermediate in catalysis. Substrate-binding positions include His-124, 154 to 155 (RD), Arg-186, Arg-192, 262 to 265 (RADR), and Lys-334. 5 residues coordinate Mn(2+): Asp-401, His-405, Asp-442, His-443, and His-461.

It belongs to the BPG-independent phosphoglycerate mutase family. As to quaternary structure, monomer. Requires Mn(2+) as cofactor.

The catalysed reaction is (2R)-2-phosphoglycerate = (2R)-3-phosphoglycerate. Its pathway is carbohydrate degradation; glycolysis; pyruvate from D-glyceraldehyde 3-phosphate: step 3/5. Its function is as follows. Catalyzes the interconversion of 2-phosphoglycerate and 3-phosphoglycerate. The sequence is that of 2,3-bisphosphoglycerate-independent phosphoglycerate mutase from Vibrio vulnificus (strain YJ016).